The following is a 40-amino-acid chain: Photosystem II reaction center protein J (40 aa).

Residues 8–28 (IPLWIIGTVAGIVVIGLIGLF) traverse the membrane as a helical segment.

Belongs to the PsbJ family. PSII is composed of 1 copy each of membrane proteins PsbA, PsbB, PsbC, PsbD, PsbE, PsbF, PsbH, PsbI, PsbJ, PsbK, PsbL, PsbM, PsbT, PsbX, PsbY, PsbZ, Psb30/Ycf12, at least 3 peripheral proteins of the oxygen-evolving complex and a large number of cofactors. It forms dimeric complexes.

It localises to the plastid. It is found in the chloroplast thylakoid membrane. In terms of biological role, one of the components of the core complex of photosystem II (PSII). PSII is a light-driven water:plastoquinone oxidoreductase that uses light energy to abstract electrons from H(2)O, generating O(2) and a proton gradient subsequently used for ATP formation. It consists of a core antenna complex that captures photons, and an electron transfer chain that converts photonic excitation into a charge separation. This is Photosystem II reaction center protein J from Pisum sativum (Garden pea).